A 432-amino-acid polypeptide reads, in one-letter code: Glutamate-1-semialdehyde 2,1-aminomutase 1 (432 aa).

N6-(pyridoxal phosphate)lysine is present on K268.

The protein belongs to the class-III pyridoxal-phosphate-dependent aminotransferase family. HemL subfamily. As to quaternary structure, homodimer. Pyridoxal 5'-phosphate is required as a cofactor.

The protein localises to the cytoplasm. The catalysed reaction is (S)-4-amino-5-oxopentanoate = 5-aminolevulinate. It participates in porphyrin-containing compound metabolism; protoporphyrin-IX biosynthesis; 5-aminolevulinate from L-glutamyl-tRNA(Glu): step 2/2. This is Glutamate-1-semialdehyde 2,1-aminomutase 1 from Bacillus licheniformis (strain ATCC 14580 / DSM 13 / JCM 2505 / CCUG 7422 / NBRC 12200 / NCIMB 9375 / NCTC 10341 / NRRL NRS-1264 / Gibson 46).